A 293-amino-acid polypeptide reads, in one-letter code: AA9 family lytic polysaccharide monooxygenase E (293 aa).

An N-terminal signal peptide occupies residues 1-19 (MKGLLSVAALSLAVSEVSA). H20 and H90 together coordinate Cu(2+). C59 and C172 form a disulfide bridge. 2 residues coordinate O2: H158 and Q167. Position 169 (Y169) interacts with Cu(2+). The region spanning 257–293 (CAVAKWGQCGGNGWTGCTTCAAGSTCNTQNAYYHQCV) is the CBM1 domain.

The protein belongs to the polysaccharide monooxygenase AA9 family. Requires Cu(2+) as cofactor.

Its subcellular location is the secreted. It catalyses the reaction [(1-&gt;4)-beta-D-glucosyl]n+m + reduced acceptor + O2 = 4-dehydro-beta-D-glucosyl-[(1-&gt;4)-beta-D-glucosyl]n-1 + [(1-&gt;4)-beta-D-glucosyl]m + acceptor + H2O.. Glucose dehydrogenase and aryl-alcohol quinone oxidoreductases regulate the oxidative degradation of cellulose since they can act as catalytically efficient electron donors for LPMO9E. Its function is as follows. Lytic polysaccharide monooxygenase (LPMO) that depolymerizes crystalline and amorphous polysaccharides via the oxidation of scissile alpha- or beta-(1-4)-glycosidic bonds, yielding only C1 oxidation products. Catalysis by LPMOs requires the reduction of the active-site copper from Cu(II) to Cu(I) by a reducing agent and H(2)O(2) or O(2) as a cosubstrate. Improves the progression of lytic enzymes in delignified miscanthus cell walls. This boosting effect dependents on the cellular type which indicates contrasted recalcitrance levels in plant tissues. In Podospora anserina (strain S / ATCC MYA-4624 / DSM 980 / FGSC 10383) (Pleurage anserina), this protein is AA9 family lytic polysaccharide monooxygenase E.